We begin with the raw amino-acid sequence, 357 residues long: UDP-N-acetylglucosamine--N-acetylmuramyl-(pentapeptide) pyrophosphoryl-undecaprenol N-acetylglucosamine transferase (357 aa).

UDP-N-acetyl-alpha-D-glucosamine is bound by residues 15 to 17 (TGG), N124, R165, S194, and Q288.

It belongs to the glycosyltransferase 28 family. MurG subfamily.

The protein localises to the cell inner membrane. It catalyses the reaction di-trans,octa-cis-undecaprenyl diphospho-N-acetyl-alpha-D-muramoyl-L-alanyl-D-glutamyl-meso-2,6-diaminopimeloyl-D-alanyl-D-alanine + UDP-N-acetyl-alpha-D-glucosamine = di-trans,octa-cis-undecaprenyl diphospho-[N-acetyl-alpha-D-glucosaminyl-(1-&gt;4)]-N-acetyl-alpha-D-muramoyl-L-alanyl-D-glutamyl-meso-2,6-diaminopimeloyl-D-alanyl-D-alanine + UDP + H(+). It participates in cell wall biogenesis; peptidoglycan biosynthesis. Its function is as follows. Cell wall formation. Catalyzes the transfer of a GlcNAc subunit on undecaprenyl-pyrophosphoryl-MurNAc-pentapeptide (lipid intermediate I) to form undecaprenyl-pyrophosphoryl-MurNAc-(pentapeptide)GlcNAc (lipid intermediate II). The chain is UDP-N-acetylglucosamine--N-acetylmuramyl-(pentapeptide) pyrophosphoryl-undecaprenol N-acetylglucosamine transferase from Nostoc punctiforme (strain ATCC 29133 / PCC 73102).